Reading from the N-terminus, the 389-residue chain is Na(+)/H(+) antiporter NhaA (389 aa).

The next 11 membrane-spanning stretches (helical) occupy residues 17–37, 59–79, 95–115, 124–144, 154–174, 177–197, 213–233, 261–281, 287–307, 328–348, and 363–383; these read ILLL…LAGL, LLLW…GLEV, SLPT…YLLF, AGWA…MALL, VFLL…IALF, TDLS…LVAL, LVLW…GVII, FLIL…NMSL, PVPV…VMLF, IAPV…IASL, and LGTL…LSKV.

It belongs to the NhaA Na(+)/H(+) (TC 2.A.33) antiporter family.

It localises to the cell inner membrane. It catalyses the reaction Na(+)(in) + 2 H(+)(out) = Na(+)(out) + 2 H(+)(in). Functionally, na(+)/H(+) antiporter that extrudes sodium in exchange for external protons. The chain is Na(+)/H(+) antiporter NhaA from Shewanella sp. (strain MR-7).